A 337-amino-acid polypeptide reads, in one-letter code: tRNA N6-adenosine threonylcarbamoyltransferase (337 aa).

Residues His-111 and His-115 each coordinate Fe cation. Substrate contacts are provided by residues 134 to 138, Asp-167, Gly-180, and Asn-272; that span reads LVSGG. Asp-300 contributes to the Fe cation binding site.

Belongs to the KAE1 / TsaD family. Fe(2+) serves as cofactor.

It is found in the cytoplasm. It carries out the reaction L-threonylcarbamoyladenylate + adenosine(37) in tRNA = N(6)-L-threonylcarbamoyladenosine(37) in tRNA + AMP + H(+). In terms of biological role, required for the formation of a threonylcarbamoyl group on adenosine at position 37 (t(6)A37) in tRNAs that read codons beginning with adenine. Is involved in the transfer of the threonylcarbamoyl moiety of threonylcarbamoyl-AMP (TC-AMP) to the N6 group of A37, together with TsaE and TsaB. TsaD likely plays a direct catalytic role in this reaction. This is tRNA N6-adenosine threonylcarbamoyltransferase from Yersinia enterocolitica serotype O:8 / biotype 1B (strain NCTC 13174 / 8081).